The sequence spans 267 residues: L-aspartate dehydrogenase (267 aa).

Residues Ala-124 and Asn-190 each contribute to the NAD(+) site. The active site involves His-220.

It belongs to the L-aspartate dehydrogenase family.

The catalysed reaction is L-aspartate + NADP(+) + H2O = oxaloacetate + NH4(+) + NADPH + H(+). The enzyme catalyses L-aspartate + NAD(+) + H2O = oxaloacetate + NH4(+) + NADH + H(+). The protein operates within cofactor biosynthesis; NAD(+) biosynthesis; iminoaspartate from L-aspartate (dehydrogenase route): step 1/1. In terms of biological role, specifically catalyzes the NAD or NADP-dependent dehydrogenation of L-aspartate to iminoaspartate. This chain is L-aspartate dehydrogenase, found in Pseudomonas aeruginosa (strain ATCC 15692 / DSM 22644 / CIP 104116 / JCM 14847 / LMG 12228 / 1C / PRS 101 / PAO1).